A 140-amino-acid polypeptide reads, in one-letter code: Ribonuclease P protein subunit p20 (140 aa).

The protein belongs to the histone-like Alba family. In terms of assembly, component of nuclear RNase P and RNase MRP complexes. RNase P consists of a catalytic RNA moiety and 10 different protein chains; POP1, POP4, POP5, POP7, RPP14, RPP21, RPP25, RPP30, RPP38 and RPP40. Within the RNase P complex, POP1, POP7 and RPP25 form the 'finger' subcomplex, POP5, RPP14, RPP40 and homodimeric RPP30 form the 'palm' subcomplex, and RPP21, POP4 and RPP38 form the 'wrist' subcomplex. All subunits of the RNase P complex interact with the catalytic RNA. Several subunits of RNase P are also part of the RNase MRP complex. RNase MRP consists of a catalytic RNA moiety and about 8 protein subunits; POP1, POP7, RPP25, RPP30, RPP38, RPP40 and possibly also POP4 and POP5. Interacts with SMN1. POP7 forms a heterodimer with RPP25 that binds to the P3 stem loop of the catalytic RNA.

It localises to the nucleus. The protein resides in the nucleolus. Its subcellular location is the cytoplasm. It is found in the cytoplasmic granule. In terms of biological role, component of ribonuclease P, a ribonucleoprotein complex that generates mature tRNA molecules by cleaving their 5'-ends. Also a component of the MRP ribonuclease complex, which cleaves pre-rRNA sequences. The protein is Ribonuclease P protein subunit p20 (Pop7) of Mus musculus (Mouse).